Reading from the N-terminus, the 796-residue chain is Disintegrin and metalloproteinase domain-containing protein B (796 aa).

An N-terminal signal peptide occupies residues 1–23; it reads MKALSCLLAVIATAGSLFQHVDA. The Extracellular portion of the chain corresponds to 24 to 706; sequence RSHARDRLNN…VSDWVSRHKP (683 aa). Residues Asn33, Asn226, Asn313, and Asn407 are each glycosylated (N-linked (GlcNAc...) asparagine). Residues 271 to 510 enclose the Peptidase M12B domain; sequence RVALIGVVAD…HSILTNCLTT (240 aa). Cystine bridges form between Cys395–Cys495, Cys448–Cys459, and Cys580–Cys600. Position 431 (His431) interacts with Zn(2+). Residue Glu432 is part of the active site. Zn(2+) contacts are provided by His435 and His441. The region spanning 519 to 608 is the Disintegrin domain; the sequence is GQQCGNGIVE…DCPRDTHSKN (90 aa). A helical membrane pass occupies residues 707 to 727; sequence IVIGVAVGVGCLLLLAILSCI. Residues 728–796 are Cytoplasmic-facing; it reads CGRSKKRRPR…PGRMPSTRYA (69 aa). The segment at 737 to 796 is disordered; it reads RNRKMAPINMRPMPPVYNGWTGPPPNAESPGGHPQYNHVPPPINAPPPAYPGRMPSTRYA. Residues 775 to 786 are compositionally biased toward pro residues; sequence VPPPINAPPPAY.

Zn(2+) is required as a cofactor.

Its subcellular location is the membrane. In terms of biological role, probable zinc protease. The polypeptide is Disintegrin and metalloproteinase domain-containing protein B (ADM-B) (Arthroderma otae (strain ATCC MYA-4605 / CBS 113480) (Microsporum canis)).